A 1031-amino-acid chain; its full sequence is Protein translocase subunit SecA (1031 aa).

ATP is bound by residues glutamine 143, 161–165 (GEGKT), and aspartate 662. Zn(2+) contacts are provided by cysteine 1015, cysteine 1017, cysteine 1026, and cysteine 1027.

This sequence belongs to the SecA family. Monomer and homodimer. Part of the essential Sec protein translocation apparatus which comprises SecA, SecYEG and auxiliary proteins SecDF. Other proteins may also be involved. Requires Zn(2+) as cofactor.

Its subcellular location is the cell inner membrane. It is found in the cytoplasm. It catalyses the reaction ATP + H2O + cellular proteinSide 1 = ADP + phosphate + cellular proteinSide 2.. Functionally, part of the Sec protein translocase complex. Interacts with the SecYEG preprotein conducting channel. Has a central role in coupling the hydrolysis of ATP to the transfer of proteins into and across the cell membrane, serving as an ATP-driven molecular motor driving the stepwise translocation of polypeptide chains across the membrane. The chain is Protein translocase subunit SecA from Chlorobaculum tepidum (strain ATCC 49652 / DSM 12025 / NBRC 103806 / TLS) (Chlorobium tepidum).